Here is a 259-residue protein sequence, read N- to C-terminus: Ribonuclease HII (259 aa).

Residues M1 to N26 are disordered. An RNase H type-2 domain is found at A55–E243. The a divalent metal cation site is built by D61, E62, and D152.

This sequence belongs to the RNase HII family. The cofactor is Mn(2+). Mg(2+) serves as cofactor.

The protein resides in the cytoplasm. It catalyses the reaction Endonucleolytic cleavage to 5'-phosphomonoester.. Endonuclease that specifically degrades the RNA of RNA-DNA hybrids. This chain is Ribonuclease HII, found in Azorhizobium caulinodans (strain ATCC 43989 / DSM 5975 / JCM 20966 / LMG 6465 / NBRC 14845 / NCIMB 13405 / ORS 571).